Here is a 102-residue protein sequence, read N- to C-terminus: Urease subunit beta (102 aa).

It belongs to the urease beta subunit family. Heterotrimer of UreA (gamma), UreB (beta) and UreC (alpha) subunits. Three heterotrimers associate to form the active enzyme.

It is found in the cytoplasm. The catalysed reaction is urea + 2 H2O + H(+) = hydrogencarbonate + 2 NH4(+). The protein operates within nitrogen metabolism; urea degradation; CO(2) and NH(3) from urea (urease route): step 1/1. The chain is Urease subunit beta from Methylibium petroleiphilum (strain ATCC BAA-1232 / LMG 22953 / PM1).